A 413-amino-acid polypeptide reads, in one-letter code: DnaJ protein homolog (413 aa).

The J domain occupies Asn10–Asp75. A CR-type zinc finger spans residues Gly133–Lys217. CXXCXGXG motif repeat units lie at residues Cys146–Gly153, Cys162–Gly169, Cys189–Gly196, and Cys205–Lys212. Positions Arg387–Gln413 are disordered. A Cysteine methyl ester modification is found at Cys410. Cys410 is lipidated: S-farnesyl cysteine. The propeptide at Ala411–Gln413 is removed in mature form.

Expressed in seedlings in all tissues, but exceedingly high levels in hypocotyledons and roots.

Its subcellular location is the cell membrane. In terms of biological role, plays a continuous role in plant development probably in the structural organization of compartments. The sequence is that of DnaJ protein homolog (DNAJ1) from Cucumis sativus (Cucumber).